Reading from the N-terminus, the 682-residue chain is Potassium-transporting ATPase ATP-binding subunit (682 aa).

4 helical membrane passes run 34-54 (PVMF…IAMA), 62-82 (ALFS…ANFA), 219-239 (IALT…TATL), and 254-274 (VLVA…LSAI). Asp-307 acts as the 4-aspartylphosphate intermediate in catalysis. ATP contacts are provided by residues Asp-344, Glu-348, 377–384 (FTAQSRMS), and Lys-395. Asp-518 and Asp-522 together coordinate Mg(2+). 3 helical membrane-spanning segments follow: residues 588 to 608 (FAII…LNIM), 616 to 636 (AILS…PLAL), and 656 to 676 (IYGL…DLLL).

This sequence belongs to the cation transport ATPase (P-type) (TC 3.A.3) family. Type IA subfamily. As to quaternary structure, the system is composed of three essential subunits: KdpA, KdpB and KdpC.

Its subcellular location is the cell inner membrane. It carries out the reaction K(+)(out) + ATP + H2O = K(+)(in) + ADP + phosphate + H(+). Functionally, part of the high-affinity ATP-driven potassium transport (or Kdp) system, which catalyzes the hydrolysis of ATP coupled with the electrogenic transport of potassium into the cytoplasm. This subunit is responsible for energy coupling to the transport system and for the release of the potassium ions to the cytoplasm. The chain is Potassium-transporting ATPase ATP-binding subunit from Escherichia coli O8 (strain IAI1).